The primary structure comprises 134 residues: Peptide methionine sulfoxide reductase MsrB (134 aa).

Residues 9–131 (DEYWRDKLDA…NSASIQLQKE (123 aa)) form the MsrB domain. 4 residues coordinate Zn(2+): Cys-48, Cys-51, Cys-97, and Cys-100. The Nucleophile role is filled by Cys-120.

This sequence belongs to the MsrB Met sulfoxide reductase family. The cofactor is Zn(2+).

The catalysed reaction is L-methionyl-[protein] + [thioredoxin]-disulfide + H2O = L-methionyl-(R)-S-oxide-[protein] + [thioredoxin]-dithiol. The polypeptide is Peptide methionine sulfoxide reductase MsrB (Saccharophagus degradans (strain 2-40 / ATCC 43961 / DSM 17024)).